Consider the following 273-residue polypeptide: N-alpha-acetyltransferase 30 (273 aa).

Disordered stretches follow at residues 1–39 (MADA…HQLN) and 62–85 (QKTR…PNGL). One can recognise an N-acetyltransferase domain in the interval 125–273 (RYVRYESELQ…DALRLKLWLR (149 aa)).

The protein belongs to the acetyltransferase family. MAK3 subfamily. In terms of assembly, component of the N-terminal acetyltransferase C (NatC) complex.

Its subcellular location is the cytoplasm. The protein resides in the nucleus. The catalysed reaction is N-terminal L-methionyl-L-leucyl-[protein] + acetyl-CoA = N-terminal N(alpha)-acetyl-L-methionyl-L-leucyl-[protein] + CoA + H(+). It carries out the reaction N-terminal L-methionyl-L-isoleucyl-[protein] + acetyl-CoA = N-terminal N(alpha)-acetyl-L-methionyl-L-isoleucyl-[protein] + CoA + H(+). The enzyme catalyses N-terminal L-methionyl-L-phenylalanyl-[protein] + acetyl-CoA = N-terminal N(alpha)-acetyl-L-methionyl-L-phenylalanyl-[protein] + CoA + H(+). It catalyses the reaction N-terminal L-methionyl-L-tryptophyl-[protein] + acetyl-CoA = N-terminal N(alpha)-acetyl-L-methionyl-L-tryptophyl-[protein] + CoA + H(+). The catalysed reaction is N-terminal L-methionyl-L-tyrosyl-[protein] + acetyl-CoA = N-terminal N(alpha)-acetyl-L-methionyl-L-tyrosyl-[protein] + CoA + H(+). In terms of biological role, catalytic subunit of the N-terminal acetyltransferase C (NatC) complex. Catalyzes acetylation of the N-terminal methionine residues of peptides beginning with Met-Leu-Ala and Met-Leu-Gly. N-terminal acetylation protects proteins from ubiquitination and degradation by the N-end rule pathway. This is N-alpha-acetyltransferase 30 (naa30) from Xenopus laevis (African clawed frog).